We begin with the raw amino-acid sequence, 228 residues long: E3 ubiquitin-protein ligase RNF114 (228 aa).

An RING-type zinc finger spans residues 29-68 (CPVCLEVYEKPVQVPCGHVFCSACLQECLKPKKPVCGVCR). Cysteine 91 and cysteine 94 together coordinate Zn(2+). Residues 91–110 (CHGCRKKFFLSKIRSHVATC) form a C2HC RNF-type zinc finger. Residue lysine 102 is modified to N6-acetyllysine. Zn(2+)-binding residues include histidine 106 and cysteine 110. Residue lysine 112 is modified to N6-acetyllysine.

In terms of assembly, interacts with XAF1, the interaction increases XAF1 stability and proapoptotic effects, and may regulate IFN signaling. In terms of processing, autoubiquitinated. Polyubiquitinated in the presence of E2 enzymes UBE2D1, UBE2D2 and UBE2D3, but only monoubiquitinated in the presence of UBE2E1.

The protein resides in the cytoplasm. It localises to the nucleus. The enzyme catalyses S-ubiquitinyl-[E2 ubiquitin-conjugating enzyme]-L-cysteine + [acceptor protein]-L-lysine = [E2 ubiquitin-conjugating enzyme]-L-cysteine + N(6)-ubiquitinyl-[acceptor protein]-L-lysine.. It participates in protein modification; protein ubiquitination. Its function is as follows. E3 ubiquitin-protein ligase that promotes the ubiquitination of various substrates. In turn, participates in the regulation of many biological processes including cell cycle, apoptosis, osteoclastogenesis as well as innate or adaptive immunity. Acts as negative regulator of NF-kappa-B-dependent transcription by promoting the ubiquitination and stabilization of the NF-kappa-B inhibitor TNFAIP3. May promote the ubiquitination of TRAF6 as well. Also acts as a negative regulator of T-cell activation. Inhibits cellular dsRNA responses and interferon production by targeting MAVS component for proteasomal degradation. Ubiquitinates the CDK inhibitor CDKN1A leading to its degradationand probably also CDKN1B and CDKN1C. This activity stimulates cell cycle G1-to-S phase transition and suppresses cellular senescence. May play a role in spermatogenesis. The chain is E3 ubiquitin-protein ligase RNF114 (RNF114) from Pan troglodytes (Chimpanzee).